Here is a 170-residue protein sequence, read N- to C-terminus: Small ribosomal subunit protein uS13m (170 aa).

A disordered region spans residues 130–170; sequence LKKKPTNRKERRIFNKIKKLQDKHNKQQQKNKKSKKWKTKK. Composition is skewed to basic residues over residues 132 to 147 and 155 to 170; these read KKPT…NKIK and KQQQ…KTKK.

It belongs to the universal ribosomal protein uS13 family. Part of the small ribosomal subunit.

The protein localises to the mitochondrion. Its function is as follows. Located at the top of the head of the small subunit, it contacts several helices of the small subunit rRNA. This chain is Small ribosomal subunit protein uS13m (mrps13), found in Dictyostelium citrinum (Slime mold).